The primary structure comprises 305 residues: Testis-expressed protein 52 (305 aa).

The interval 284 to 305 (HLSKAQASKSPARKRKRRPGHF) is disordered. Positions 294-305 (PARKRKRRPGHF) are enriched in basic residues.

In terms of tissue distribution, expressed in Testis.

The polypeptide is Testis-expressed protein 52 (Homo sapiens (Human)).